The sequence spans 279 residues: Large ribosomal subunit protein uL2 (279 aa).

The disordered stretch occupies residues 224–279 (AMNPIDHPHGGGEGRTSGGRHPVTPWGKGTKGNRTRKSKASDKLIVRSRHAKKKGR). A compositionally biased stretch (basic residues) spans 269–279 (VRSRHAKKKGR).

This sequence belongs to the universal ribosomal protein uL2 family. Part of the 50S ribosomal subunit. Forms a bridge to the 30S subunit in the 70S ribosome.

One of the primary rRNA binding proteins. Required for association of the 30S and 50S subunits to form the 70S ribosome, for tRNA binding and peptide bond formation. It has been suggested to have peptidyltransferase activity; this is somewhat controversial. Makes several contacts with the 16S rRNA in the 70S ribosome. This chain is Large ribosomal subunit protein uL2, found in Cereibacter sphaeroides (strain ATCC 17025 / ATH 2.4.3) (Rhodobacter sphaeroides).